We begin with the raw amino-acid sequence, 167 residues long: MSLVALYTGSFDPLTLGHMDVIGNAAVLCDEVIVAIGVNPSKTPLFTAQERITLIESACGPLFASHACKLSVRLFSGLAVEAAREAGAQLLVRGLRDGSDLDFEMQMASMNRVMAPDIQTIFFPAAPAVRHITATLVRQVATMGGDASPFVPPVVAAALAQKTSLPS.

Ser10 contributes to the substrate binding site. Residues 10-11 and His18 each bind ATP; that span reads SF. Positions 42, 79, and 93 each coordinate substrate. ATP contacts are provided by residues 94 to 96, Glu104, and 129 to 135; these read GLR and VRHITAT.

This sequence belongs to the bacterial CoaD family. In terms of assembly, homohexamer. Requires Mg(2+) as cofactor.

The protein resides in the cytoplasm. The catalysed reaction is (R)-4'-phosphopantetheine + ATP + H(+) = 3'-dephospho-CoA + diphosphate. Its pathway is cofactor biosynthesis; coenzyme A biosynthesis; CoA from (R)-pantothenate: step 4/5. In terms of biological role, reversibly transfers an adenylyl group from ATP to 4'-phosphopantetheine, yielding dephospho-CoA (dPCoA) and pyrophosphate. The chain is Phosphopantetheine adenylyltransferase from Beijerinckia indica subsp. indica (strain ATCC 9039 / DSM 1715 / NCIMB 8712).